Here is a 282-residue protein sequence, read N- to C-terminus: NADPH-dependent 7-cyano-7-deazaguanine reductase (282 aa).

88 to 90 contributes to the substrate binding site; sequence IES. 90-91 provides a ligand contact to NADPH; the sequence is SK. Catalysis depends on cysteine 190, which acts as the Thioimide intermediate. The active-site Proton donor is aspartate 197. 229-230 contacts substrate; it reads HE. 258 to 259 provides a ligand contact to NADPH; that stretch reads RG.

The protein belongs to the GTP cyclohydrolase I family. QueF type 2 subfamily. Homodimer.

The protein localises to the cytoplasm. The enzyme catalyses 7-aminomethyl-7-carbaguanine + 2 NADP(+) = 7-cyano-7-deazaguanine + 2 NADPH + 3 H(+). It functions in the pathway tRNA modification; tRNA-queuosine biosynthesis. Its function is as follows. Catalyzes the NADPH-dependent reduction of 7-cyano-7-deazaguanine (preQ0) to 7-aminomethyl-7-deazaguanine (preQ1). The polypeptide is NADPH-dependent 7-cyano-7-deazaguanine reductase (Salmonella arizonae (strain ATCC BAA-731 / CDC346-86 / RSK2980)).